We begin with the raw amino-acid sequence, 202 residues long: MQAFIRAHGIILPMNQDHVDTDAIIPQRWLVTVERDGLADGFMGAWRYDEHGQPRPECVLNQPAYQGAAIVLARENYGCGSSREHAVWAHQGYGIRAIVAASYGPIFHENCLKNGLLPITLPAADVATLMAQALADPGCACEVDLVSQRVIGPDGRAYPFEIDAGRRQLLLEGVDDIDLALARAADIAAFQRRQQQDQPWLA.

This sequence belongs to the LeuD family. LeuD type 1 subfamily. As to quaternary structure, heterodimer of LeuC and LeuD.

It catalyses the reaction (2R,3S)-3-isopropylmalate = (2S)-2-isopropylmalate. It functions in the pathway amino-acid biosynthesis; L-leucine biosynthesis; L-leucine from 3-methyl-2-oxobutanoate: step 2/4. Catalyzes the isomerization between 2-isopropylmalate and 3-isopropylmalate, via the formation of 2-isopropylmaleate. The sequence is that of 3-isopropylmalate dehydratase small subunit 2 from Bordetella parapertussis (strain 12822 / ATCC BAA-587 / NCTC 13253).